The primary structure comprises 1943 residues: Cadherin-86C (1943 aa).

Residues Met-1–Pro-102 are disordered. The Extracellular segment spans residues Met-1–Lys-934. A glycan (N-linked (GlcNAc...) asparagine) is linked at Asn-12. The span at Pro-50–Gln-89 shows a compositional bias: basic residues. Over residues His-90–His-100 the composition is skewed to low complexity. Cadherin domains follow at residues Cys-238–Phe-366, Thr-367–Phe-483, Glu-484–Phe-600, Glu-601–Phe-708, and Asp-709–Phe-832. 7 N-linked (GlcNAc...) asparagine glycosylation sites follow: Asn-244, Asn-419, Asn-531, Asn-579, Asn-585, Asn-612, and Asn-645. The N-linked (GlcNAc...) asparagine glycan is linked to Asn-912. Residues Val-935 to Leu-955 traverse the membrane as a helical segment. The Cytoplasmic segment spans residues Leu-956–Ser-1943. 5 disordered regions span residues Asp-1038 to Glu-1058, Lys-1390 to Ile-1442, Glu-1458 to Arg-1516, Tyr-1546 to Val-1695, and Lys-1707 to Asp-1895. A compositionally biased stretch (basic and acidic residues) spans Glu-1047–Glu-1058. Over residues Ile-1426–Ile-1442 the composition is skewed to basic residues. Basic and acidic residues-rich tracts occupy residues Gln-1486 to Arg-1497 and His-1507 to Arg-1516. Over residues Asp-1552–Glu-1568 the composition is skewed to acidic residues. Positions Gln-1580–Lys-1602 are enriched in basic and acidic residues. Polar residues predominate over residues Lys-1633–Ile-1667. The span at Ser-1709–Ser-1724 shows a compositional bias: low complexity. Composition is skewed to basic and acidic residues over residues Thr-1754–Pro-1764, Leu-1774–Thr-1793, His-1800–Ala-1810, and Lys-1837–Val-1863. Positions His-1879–Thr-1889 are enriched in polar residues.

As to expression, as cell intercalation proceeds, a row of stigmatophore cells surrounding the spiracular chamber show expression of Cad86C. Expression is regulated by the Abd-B cascade, requiring sal. Expressed in a broad region of the morphogenetic furrow and in clusters of cells posterior to the morphogenetic furrow. Weakly expressed in the epithelium of wing imaginal disks. In eye imaginal disk cells within the morphogenetic furrow, expression is localized to the apical region.

Its subcellular location is the cell membrane. Cadherins are calcium-dependent cell adhesion proteins. They preferentially interact with themselves in a homophilic manner in connecting cells. This Drosophila melanogaster (Fruit fly) protein is Cadherin-86C (Cad86C).